Here is a 423-residue protein sequence, read N- to C-terminus: Serine hydroxymethyltransferase (423 aa).

(6S)-5,6,7,8-tetrahydrofolate is bound by residues L118 and 122 to 124 (GHL). K227 bears the N6-(pyridoxal phosphate)lysine mark. 351–353 (SPF) is a (6S)-5,6,7,8-tetrahydrofolate binding site.

It belongs to the SHMT family. As to quaternary structure, homodimer. The cofactor is pyridoxal 5'-phosphate.

It is found in the cytoplasm. The enzyme catalyses (6R)-5,10-methylene-5,6,7,8-tetrahydrofolate + glycine + H2O = (6S)-5,6,7,8-tetrahydrofolate + L-serine. It participates in one-carbon metabolism; tetrahydrofolate interconversion. It functions in the pathway amino-acid biosynthesis; glycine biosynthesis; glycine from L-serine: step 1/1. Catalyzes the reversible interconversion of serine and glycine with tetrahydrofolate (THF) serving as the one-carbon carrier. This reaction serves as the major source of one-carbon groups required for the biosynthesis of purines, thymidylate, methionine, and other important biomolecules. Also exhibits THF-independent aldolase activity toward beta-hydroxyamino acids, producing glycine and aldehydes, via a retro-aldol mechanism. The sequence is that of Serine hydroxymethyltransferase from Petrotoga mobilis (strain DSM 10674 / SJ95).